A 463-amino-acid chain; its full sequence is tRNA (guanine(37)-N(1))-methyltransferase (463 aa).

Residues His-207, 245–246 (DL), 274–275 (DG), and Asn-305 contribute to the S-adenosyl-L-methionine site.

Belongs to the class I-like SAM-binding methyltransferase superfamily. TRM5/TYW2 family. Monomer.

Its subcellular location is the mitochondrion matrix. It localises to the nucleus. It is found in the cytoplasm. The enzyme catalyses guanosine(37) in tRNA + S-adenosyl-L-methionine = N(1)-methylguanosine(37) in tRNA + S-adenosyl-L-homocysteine + H(+). Specifically methylates the N1 position of guanosine-37 in various cytoplasmic and mitochondrial tRNAs. Methylation is not dependent on the nature of the nucleoside 5' of the target nucleoside. This is the first step in the biosynthesis of wybutosine (yW), a modified base adjacent to the anticodon of tRNAs and required for accurate decoding. In Pediculus humanus subsp. corporis (Body louse), this protein is tRNA (guanine(37)-N(1))-methyltransferase.